The sequence spans 548 residues: Glucose-6-phosphate isomerase (548 aa).

Glutamate 355 (proton donor) is an active-site residue. Residues histidine 386 and lysine 511 contribute to the active site.

The protein belongs to the GPI family.

The protein localises to the cytoplasm. It carries out the reaction alpha-D-glucose 6-phosphate = beta-D-fructose 6-phosphate. The protein operates within carbohydrate biosynthesis; gluconeogenesis. Its pathway is carbohydrate degradation; glycolysis; D-glyceraldehyde 3-phosphate and glycerone phosphate from D-glucose: step 2/4. In terms of biological role, catalyzes the reversible isomerization of glucose-6-phosphate to fructose-6-phosphate. This is Glucose-6-phosphate isomerase from Wigglesworthia glossinidia brevipalpis.